Here is a 489-residue protein sequence, read N- to C-terminus: Ent-kaurenoic acid oxidase 2 (489 aa).

The helical transmembrane segment at 5-25 threads the bilayer; that stretch reads GLILMWFPLIILGLFVLKWVL. Residue C436 coordinates heme.

Belongs to the cytochrome P450 family. Requires heme as cofactor. Widely expressed. Highly expressed in influorescence stem, influorescence, and silique tissue. Weakly expressed in cauline and rosette leaves. Expressed at a weaker level in stem and influorescence than AtKAO1/CYP88A3.

Its subcellular location is the endoplasmic reticulum membrane. It catalyses the reaction ent-kaur-16-en-19-oate + 3 reduced [NADPH--hemoprotein reductase] + 3 O2 = gibberellin A12 + 3 oxidized [NADPH--hemoprotein reductase] + 4 H2O + 4 H(+). It carries out the reaction ent-kaur-16-en-19-oate + reduced [NADPH--hemoprotein reductase] + O2 = ent-7alpha-hydroxykaur-16-en-19-oate + oxidized [NADPH--hemoprotein reductase] + H2O + H(+). The enzyme catalyses ent-7alpha-hydroxykaur-16-en-19-oate + reduced [NADPH--hemoprotein reductase] + O2 = gibberellin A12 aldehyde + oxidized [NADPH--hemoprotein reductase] + 2 H2O + H(+). The catalysed reaction is gibberellin A12 aldehyde + reduced [NADPH--hemoprotein reductase] + O2 = gibberellin A12 + oxidized [NADPH--hemoprotein reductase] + H2O + 2 H(+). Its pathway is plant hormone biosynthesis; gibberellin biosynthesis. Its function is as follows. Catalyzes three successive oxidations of ent-kaurenoic acid giving gibberellin 12 (GA12), a key step in gibberellins (GAs) biosynthesis. GAs, which are involved many processes, including stem elongation, play a central role in plant development. The sequence is that of Ent-kaurenoic acid oxidase 2 from Arabidopsis thaliana (Mouse-ear cress).